The primary structure comprises 609 residues: Phosphoprotein 85 (609 aa).

The segment at 461 to 609 is disordered; the sequence is QNEGRASSRA…RSTETNDERL (149 aa). Over residues 465–478 the composition is skewed to low complexity; it reads RASSRASSSHSTST. The segment covering 484–495 has biased composition (polar residues); that stretch reads PQSGRSTPTSIL. 2 stretches are compositionally biased toward low complexity: residues 503–513 and 552–563; these read SNSRSSSVSFS and SPQSASSNNSMS. A compositionally biased stretch (basic and acidic residues) spans 600-609; that stretch reads RSTETNDERL.

This sequence belongs to the herpesviridae pp85 family. In terms of processing, phosphorylated.

It localises to the virion tegument. It is found in the host cytoplasm. In Homo sapiens (Human), this protein is Phosphoprotein 85 (U14).